The primary structure comprises 501 residues: Cytochrome P450 76M5 (501 aa).

A helical transmembrane segment spans residues 5 to 25 (ELWVLAAALAVSLLYYLAALM). Cys443 serves as a coordination point for heme.

Belongs to the cytochrome P450 family. Heme serves as cofactor.

It localises to the membrane. It catalyses the reaction ent-sandaracopimaradien-3beta-ol + reduced [NADPH--hemoprotein reductase] + O2 = oryzalexin E + oxidized [NADPH--hemoprotein reductase] + H2O + H(+). Functionally, enzyme of the diterpenoid metabolism involved in the biosynthesis of the oryzalexin class of phytoalexins. Hydroxylates ent-sandaracopimaradien. This chain is Cytochrome P450 76M5, found in Oryza sativa subsp. japonica (Rice).